Consider the following 278-residue polypeptide: HTH-type transcriptional activator RhaS (278 aa).

The HTH araC/xylS-type domain maps to 174–272 (NQLMAWLEDH…NWSPRDIRQG (99 aa)). DNA-binding regions (H-T-H motif) lie at residues 191–212 (EAVAEQFSLSLRTLHRQLKQHT) and 239–262 (VTEIAYRCGFGDSNHFSTLFRREF).

In terms of assembly, binds DNA as a dimer.

It is found in the cytoplasm. Functionally, activates expression of the rhaBAD and rhaT operons. The protein is HTH-type transcriptional activator RhaS of Salmonella enteritidis PT4 (strain P125109).